A 276-amino-acid chain; its full sequence is Elongation factor Ts, mitochondrial (276 aa).

The protein belongs to the EF-Ts family.

Its subcellular location is the mitochondrion. Functionally, associates with the EF-Tu.GDP complex and induces the exchange of GDP to GTP. It remains bound to the aminoacyl-tRNA.EF-Tu.GTP complex up to the GTP hydrolysis stage on the ribosome. The sequence is that of Elongation factor Ts, mitochondrial from Leishmania infantum.